The following is a 565-amino-acid chain: MNGKQLVAEALQAVLPDWSLDDIDVKIERPKDEKLGDYAFPTFTLAKTMRKAPNLIAVELAEKIDQGSFEKVEAVGPYINFFLDKSQTGAAILQEILADPENYGARDLGHGRNVLTEYSSPNIAKPMGMGHLRSTMIGEAIARILAKEGFKPIRIDYLGDWGTQFGKMMAAYKMWGNDADIEKDPINTLLSYYVRINREAEEHPEYDEDGREWFSKLEHGDEEAKRLWSWFREVSLERFKKVYDMLDVHFDSFTGEAFSAQMMDKPIQILREKGLLVKSQGAEIVDLEKYNLPPLMVIKSNGTSTYITRDLATAMYRKKTYGFYKSIYVVGQEQEVYFQQLRACLKEMGFDWADDIVHISFGLMSINGQKMSTRKGNVVNLEDVLNESVDLARKQISEKNAGLKNADEVAKQVGIGAVVFHDLKNYRRNPIDFNLEEVVKFEGETGPYVQYARARGESLLRKSGITDFSDADLTKIGAEEWDLVSFMARYADTIQKAMETYDPSAIAKYALELAKRFNKYYAHTRILVDDVDEDVKKARLAVVQAVSHVIKSALDLLDVKAPDEM.

Positions 121–131 (PNIAKPMGMGH) match the 'HIGH' region motif.

This sequence belongs to the class-I aminoacyl-tRNA synthetase family. In terms of assembly, monomer.

It localises to the cytoplasm. It catalyses the reaction tRNA(Arg) + L-arginine + ATP = L-arginyl-tRNA(Arg) + AMP + diphosphate. The chain is Arginine--tRNA ligase from Lactobacillus delbrueckii subsp. bulgaricus (strain ATCC BAA-365 / Lb-18).